Consider the following 207-residue polypeptide: Small ribosomal subunit protein uS4c (207 aa).

One can recognise an S4 RNA-binding domain in the interval 92–153; it reads MRLDNILFRL…PKTYQSILSK (62 aa).

The protein belongs to the universal ribosomal protein uS4 family. Part of the 30S ribosomal subunit. Contacts protein S5. The interaction surface between S4 and S5 is involved in control of translational fidelity.

It localises to the plastid. The protein localises to the chloroplast. One of the primary rRNA binding proteins, it binds directly to 16S rRNA where it nucleates assembly of the body of the 30S subunit. In terms of biological role, with S5 and S12 plays an important role in translational accuracy. In Equisetum hyemale (Dutch rush), this protein is Small ribosomal subunit protein uS4c (rps4).